Here is a 1226-residue protein sequence, read N- to C-terminus: DNA-directed RNA polymerase subunit beta'' (1226 aa).

Cysteine 223, cysteine 297, cysteine 304, and cysteine 307 together coordinate Zn(2+).

This sequence belongs to the RNA polymerase beta' chain family. RpoC2 subfamily. In plastids the minimal PEP RNA polymerase catalytic core is composed of four subunits: alpha, beta, beta', and beta''. When a (nuclear-encoded) sigma factor is associated with the core the holoenzyme is formed, which can initiate transcription. It depends on Zn(2+) as a cofactor.

It is found in the plastid. Its subcellular location is the chloroplast. It catalyses the reaction RNA(n) + a ribonucleoside 5'-triphosphate = RNA(n+1) + diphosphate. In terms of biological role, DNA-dependent RNA polymerase catalyzes the transcription of DNA into RNA using the four ribonucleoside triphosphates as substrates. The chain is DNA-directed RNA polymerase subunit beta'' from Pyropia yezoensis (Susabi-nori).